The sequence spans 232 residues: Large ribosomal subunit protein uL1 (232 aa).

This sequence belongs to the universal ribosomal protein uL1 family. As to quaternary structure, part of the 50S ribosomal subunit.

In terms of biological role, binds directly to 23S rRNA. The L1 stalk is quite mobile in the ribosome, and is involved in E site tRNA release. Protein L1 is also a translational repressor protein, it controls the translation of the L11 operon by binding to its mRNA. The polypeptide is Large ribosomal subunit protein uL1 (Bacillus licheniformis (strain ATCC 14580 / DSM 13 / JCM 2505 / CCUG 7422 / NBRC 12200 / NCIMB 9375 / NCTC 10341 / NRRL NRS-1264 / Gibson 46)).